The sequence spans 435 residues: Probable protein arginine N-methyltransferase 6 (435 aa).

Positions 1 to 48 (MQSGGDFSNGFHGDHHRELELEDKQGPSLSSFGRAKKRSHAGARDPRG) are disordered. Positions 12–25 (HGDHHRELELEDKQ) are enriched in basic and acidic residues. Positions 80–418 (DVAYFHSYAH…KENKRFMNIH (339 aa)) constitute an SAM-dependent MTase PRMT-type domain. S-adenosyl-L-methionine contacts are provided by His-93, Arg-102, Gly-126, Asp-148, and Glu-177. Active-site residues include Glu-191 and Glu-200. The interval 333–377 (PAKNTSETSIASGSSSISPSGEVNQKKRTNPSDALVLSTSPESPP) is disordered. The span at 337 to 354 (TSETSIASGSSSISPSGE) shows a compositional bias: low complexity.

The protein belongs to the class I-like SAM-binding methyltransferase superfamily. Protein arginine N-methyltransferase family. PRMT6 subfamily.

Its function is as follows. Arginine methyltransferase that can both catalyze the formation of omega-N monomethylarginine (MMA) and asymmetrical dimethylarginine (aDMA). This Arabidopsis thaliana (Mouse-ear cress) protein is Probable protein arginine N-methyltransferase 6 (PRMT6).